The following is a 552-amino-acid chain: Urocanate hydratase (552 aa).

Residues 49–50 (GG), Gln127, 173–175 (GMG), Asp193, 239–240 (NA), 260–264 (QTSAH), 270–271 (YI), and Tyr319 each bind NAD(+). Cys407 is a catalytic residue. Gly489 contributes to the NAD(+) binding site.

It belongs to the urocanase family. The cofactor is NAD(+).

The protein localises to the cytoplasm. The catalysed reaction is 4-imidazolone-5-propanoate = trans-urocanate + H2O. Its pathway is amino-acid degradation; L-histidine degradation into L-glutamate; N-formimidoyl-L-glutamate from L-histidine: step 2/3. Functionally, catalyzes the conversion of urocanate to 4-imidazolone-5-propionate. The protein is Urocanate hydratase of Bacillus cereus (strain AH820).